A 206-amino-acid chain; its full sequence is Small ribosomal subunit protein uS4 (206 aa).

In terms of domain architecture, S4 RNA-binding spans 96–156 (SRLDNVVYRM…EKSKKQLRIQ (61 aa)).

This sequence belongs to the universal ribosomal protein uS4 family. Part of the 30S ribosomal subunit. Contacts protein S5. The interaction surface between S4 and S5 is involved in control of translational fidelity.

Functionally, one of the primary rRNA binding proteins, it binds directly to 16S rRNA where it nucleates assembly of the body of the 30S subunit. Its function is as follows. With S5 and S12 plays an important role in translational accuracy. In Francisella philomiragia subsp. philomiragia (strain ATCC 25017 / CCUG 19701 / FSC 153 / O#319-036), this protein is Small ribosomal subunit protein uS4.